A 548-amino-acid chain; its full sequence is Elongator complex protein 3 (548 aa).

A Radical SAM core domain is found at 83-373 (RTASGIAVVA…YRVQRDIPMP (291 aa)). Cys-100, Cys-110, and Cys-113 together coordinate [4Fe-4S] cluster. Residues Lys-165, 475-478 (ELHV), 498-500 (FGM), and Tyr-531 contribute to the acetyl-CoA site. Positions 397 to 548 (TECRDVRTRE…EGPYMVKNLY (152 aa)) constitute an N-acetyltransferase domain.

The protein belongs to the ELP3 family. As to quaternary structure, component of the elongator complex. The cofactor is [4Fe-4S] cluster.

The protein resides in the cytoplasm. The protein localises to the nucleus. The enzyme catalyses uridine(34) in tRNA + acetyl-CoA + S-adenosyl-L-methionine + H2O = 5-(carboxymethyl)uridine(34) in tRNA + 5'-deoxyadenosine + L-methionine + CoA + 2 H(+). It functions in the pathway tRNA modification; 5-methoxycarbonylmethyl-2-thiouridine-tRNA biosynthesis. Its function is as follows. Catalytic tRNA acetyltransferase subunit of the elongator complex which is required for multiple tRNA modifications, including mcm5U (5-methoxycarbonylmethyl uridine), mcm5s2U (5-methoxycarbonylmethyl-2-thiouridine), and ncm5U (5-carbamoylmethyl uridine). In the elongator complex, acts as a tRNA uridine(34) acetyltransferase by mediating formation of carboxymethyluridine in the wobble base at position 34 in tRNAs. Involved in neurogenesis. Involved in somite development. The chain is Elongator complex protein 3 from Danio rerio (Zebrafish).